A 197-amino-acid chain; its full sequence is Phosphoheptose isomerase (197 aa).

The 162-residue stretch at Met36–Glu197 folds into the SIS domain. Asn51 to Gly53 provides a ligand contact to substrate. Zn(2+) contacts are provided by His60 and Glu64. Substrate is bound by residues Glu64, Asn93–Asp94, Ser119–Ser121, Ser124, and Gln174. Gln174 and His182 together coordinate Zn(2+).

Belongs to the SIS family. GmhA subfamily. Homotetramer. Zn(2+) serves as cofactor.

It localises to the cytoplasm. The enzyme catalyses 2 D-sedoheptulose 7-phosphate = D-glycero-alpha-D-manno-heptose 7-phosphate + D-glycero-beta-D-manno-heptose 7-phosphate. The protein operates within carbohydrate biosynthesis; D-glycero-D-manno-heptose 7-phosphate biosynthesis; D-glycero-alpha-D-manno-heptose 7-phosphate and D-glycero-beta-D-manno-heptose 7-phosphate from sedoheptulose 7-phosphate: step 1/1. Functionally, catalyzes the isomerization of sedoheptulose 7-phosphate in D-glycero-D-manno-heptose 7-phosphate. In Azoarcus sp. (strain BH72), this protein is Phosphoheptose isomerase.